A 433-amino-acid chain; its full sequence is MEWLDLPLVRCAAGKVRLPGSKSISNRVLLLSALAEGTTTISNLLESDDTGRMLDALKMLGVAVTRTDEDQYLITGCSGRFSVKEADLFLGNAGTAFRPLTAVLSLMHGHYHLSGVPRMHERPIGDLVDALRQVGAVITYLEREHFPPLEIHPAAIHPADILINGNISSQFLSGLLMALPLAGEPATIIVNGTLISQPYVTLTIAQMAYFGVQVERESWLRFIVPGNQIYHSPGKIVVEGDASSASYFLAAGAIAGGPVRVDGVGRDSCQGDIRFVEALEAMGACIKMGSDWIESSAPGCRSDGKVLKAIDFDCNHIPDAAMTLATTALFAQGTTTLRNIASWRVKETDRITAMSTELRKLGAQVESGDDFLRITPPDDPLVANTVIDTYDDHRMAMCFSLISLGTPVRINDPHCVAKTFPDYFEKFTAITHQ.

Positions 22, 23, and 27 each coordinate 3-phosphoshikimate. Lys22 is a phosphoenolpyruvate binding site. Phosphoenolpyruvate contacts are provided by Gly94 and Arg122. 6 residues coordinate 3-phosphoshikimate: Ser168, Ser169, Gln170, Ser196, Asp319, and Lys346. Gln170 contacts phosphoenolpyruvate. The active-site Proton acceptor is the Asp319. Phosphoenolpyruvate-binding residues include Arg350, Arg394, and Lys418.

This sequence belongs to the EPSP synthase family. In terms of assembly, monomer.

The protein localises to the cytoplasm. The enzyme catalyses 3-phosphoshikimate + phosphoenolpyruvate = 5-O-(1-carboxyvinyl)-3-phosphoshikimate + phosphate. It participates in metabolic intermediate biosynthesis; chorismate biosynthesis; chorismate from D-erythrose 4-phosphate and phosphoenolpyruvate: step 6/7. Its function is as follows. Catalyzes the transfer of the enolpyruvyl moiety of phosphoenolpyruvate (PEP) to the 5-hydroxyl of shikimate-3-phosphate (S3P) to produce enolpyruvyl shikimate-3-phosphate and inorganic phosphate. The protein is 3-phosphoshikimate 1-carboxyvinyltransferase of Nitrosomonas eutropha (strain DSM 101675 / C91 / Nm57).